The following is a 137-amino-acid chain: ATP synthase epsilon chain 1 (137 aa).

This sequence belongs to the ATPase epsilon chain family. In terms of assembly, F-type ATPases have 2 components, CF(1) - the catalytic core - and CF(0) - the membrane proton channel. CF(1) has five subunits: alpha(3), beta(3), gamma(1), delta(1), epsilon(1). CF(0) has three main subunits: a, b and c.

It is found in the cell inner membrane. Its function is as follows. Produces ATP from ADP in the presence of a proton gradient across the membrane. The protein is ATP synthase epsilon chain 1 (atpC1) of Ralstonia nicotianae (strain ATCC BAA-1114 / GMI1000) (Ralstonia solanacearum).